Reading from the N-terminus, the 85-residue chain is Homeobox protein liguleless 3 (85 aa).

An ELK domain is found at 1–21 (ELKEMLLKKYSGCLSRLRSEF). The segment at residues 22 to 85 (LKKRKKGKLP…NQRKRHWKPS (64 aa)) is a DNA-binding region (homeobox; TALE-type).

This sequence belongs to the TALE/KNOX homeobox family.

The protein resides in the nucleus. Functionally, probably binds to the DNA sequence 5'-TGAC-3'. The sequence is that of Homeobox protein liguleless 3 (LG3) from Zea mays (Maize).